A 297-amino-acid chain; its full sequence is uncharacterized protein (297 aa).

This is an uncharacterized protein from Bacillus subtilis (strain 168).